Here is a 116-residue protein sequence, read N- to C-terminus: Early 4 ORF3 protein (116 aa).

The protein belongs to the adenoviridae E4 ORF3 family. Homodimer. Multimerizes through C-terminus tail by reciprocal or nonreciprocal interactions. Interacts with host PML isoform 2 C-terminal disordered region. Interacts with E1B-55k; this interaction is necessary for E1B 55 kDa protein to localize to the nuclear matrix fraction of the cell. May interact with host TRIM24, CREBBP, EP300, PRKDC and the MRN complex MRE11/RAD50/NBS1; these interactions may happen through nuclear bodies complexes.

Its subcellular location is the host nucleus. Functionally, forms a multivalent network in host nucleus that inhibits nuclear bodies and prevents antiviral cellular activities. The network is made of multimerized dimers and surrounds adenovirus replication centers and nucleolus. Plays a role in splicing of the major late transcript. Prevents viral genome concatemer formation. This is Early 4 ORF3 protein from Human adenovirus C serotype 2 (HAdV-2).